Here is a 300-residue protein sequence, read N- to C-terminus: Integrin-binding sialoprotein (300 aa).

The disordered stretch occupies residues 41-258 (RFPVQSSSDS…YEQTGAHEYD (218 aa)). A phosphoserine mark is found at serine 46, serine 51, serine 59, serine 60, serine 82, and serine 90. A compositionally biased stretch (low complexity) spans 46-58 (SSSDSSEENGNGD). The span at 59-92 (SSEEEEEEEENSNEEENNEENEDSDGNEDEDSEA) shows a compositional bias: acidic residues. Residues 93 to 102 (ENITLSTTTL) are compositionally biased toward polar residues. A glycan (N-linked (GlcNAc...) asparagine) is linked at asparagine 94. Basic and acidic residues predominate over residues 125–136 (KAGDIGKKSAKE). Residues 137–160 (EESDEDEEEEEENEENEAEVDDNE) show a composition bias toward acidic residues. Serine 139 bears the Phosphoserine mark. Composition is skewed to polar residues over residues 161 to 173 (QGTN…STEV), 193 to 202 (VTEAQGTTVA), and 229 to 243 (ISGT…TTTP). Asparagine 164 and asparagine 169 each carry an N-linked (GlcNAc...) asparagine glycan. At serine 266 the chain carries Phosphoserine. An Integrin-binding motif motif is present at residues 272–274 (RGD). Serine 293 bears the Phosphoserine mark. Tyrosine 299 and tyrosine 300 each carry sulfotyrosine.

In terms of assembly, monomer. Interacts with integrins; the interaction promotes cell adhesion.

It is found in the secreted. Functionally, binds tightly to hydroxyapatite. Appears to form an integral part of the mineralized matrix. Probably important to cell-matrix interaction. Promotes adhesion and migration of various cells via the alpha-V/beta-3 integrin receptor (ITGAV:ITGB3). This Sus scrofa (Pig) protein is Integrin-binding sialoprotein (IBSP).